Here is a 272-residue protein sequence, read N- to C-terminus: Glucosyl-3-phosphoglycerate/mannosyl-3-phosphoglycerate phosphatase (272 aa).

D8 acts as the Nucleophile in catalysis. 3 residues coordinate Mg(2+): D8, D10, and D214.

This sequence belongs to the HAD-like hydrolase superfamily. MPGP family. As to quaternary structure, monomer. It depends on Co(2+) as a cofactor. Mg(2+) is required as a cofactor. The cofactor is Ni(2+).

It catalyses the reaction (2R)-2-O-(alpha-D-glucopyranosyl)-3-phospho-glycerate + H2O = (2R)-2-O-(alpha-D-glucopyranosyl)-glycerate + phosphate. The catalysed reaction is 2-O-(alpha-D-mannosyl)-3-phosphoglycerate + H2O = (2R)-2-O-(alpha-D-mannosyl)-glycerate + phosphate. Involved in the biosynthesis of glucosylglycerate. Catalyzes the dephosphorylation of glucosyl-3-phosphoglycerate (GPG) and mannosyl-3-phosphoglycerate (MPG) to glucosylglycerate (GG) and mannosylglycerate (MG), respectively. The polypeptide is Glucosyl-3-phosphoglycerate/mannosyl-3-phosphoglycerate phosphatase (Methanococcoides burtonii (strain DSM 6242 / NBRC 107633 / OCM 468 / ACE-M)).